Here is an 85-residue protein sequence, read N- to C-terminus: Large ribosomal subunit protein bL27 (85 aa).

The tract at residues 1–20 is disordered; the sequence is MAHKKAGGSTRNGRDSEAKR.

This sequence belongs to the bacterial ribosomal protein bL27 family.

This chain is Large ribosomal subunit protein bL27, found in Proteus mirabilis (strain HI4320).